A 316-amino-acid chain; its full sequence is Ribosomal RNA small subunit methyltransferase H (316 aa).

S-adenosyl-L-methionine is bound by residues 35 to 37 (AGH), Asp55, Phe84, Asp105, and Gln112.

Belongs to the methyltransferase superfamily. RsmH family.

It is found in the cytoplasm. The enzyme catalyses cytidine(1402) in 16S rRNA + S-adenosyl-L-methionine = N(4)-methylcytidine(1402) in 16S rRNA + S-adenosyl-L-homocysteine + H(+). Its function is as follows. Specifically methylates the N4 position of cytidine in position 1402 (C1402) of 16S rRNA. This Streptococcus pneumoniae (strain Taiwan19F-14) protein is Ribosomal RNA small subunit methyltransferase H.